We begin with the raw amino-acid sequence, 1535 residues long: Lysine-specific demethylase 5D (1535 aa).

A JmjN domain is found at 14 to 55 (CPVFEPSWAEFQDPLGYIAKIRPIAEKSGICKIRPPADWQPP). The ARID domain maps to 79 to 169 (TRVKLNYLDQ…IIYPYEMFQS (91 aa)). The tract at residues 192 to 227 (PHSIPLRQSVQPSKFSSYSRRAKRLQPDPEPTEEDI) is disordered. Residues 197 to 210 (LRQSVQPSKFSSYS) are compositionally biased toward polar residues. Residues K205, K229, K244, and K272 each participate in a glycyl lysine isopeptide (Lys-Gly) (interchain with G-Cter in SUMO2) cross-link. 2 positions are modified to phosphoserine: S291 and S307. The PHD-type 1 zinc finger occupies 314-364 (SYICQVCSRGDEDDKLLFCDGCDDNYHIFCLLPPLPEIPRGIWRCPKCILA). Y430 provides a ligand contact to 2-oxoglutarate. One can recognise a JmjC domain in the interval 458 to 624 (EYATSGWNLN…AGRQCIEHYR (167 aa)). Positions 504 and 506 each coordinate Fe cation. Positions 512, 514, and 522 each coordinate 2-oxoglutarate. H592 provides a ligand contact to Fe cation. The C5HC2 zinc-finger motif lies at 697-749 (CIKCKTTCFLSALACYDCPDGLVCLSHINDLCKCSSSRQYLRYRYTLDELPTM). S884 bears the Phosphoserine mark. The PHD-type 2 zinc finger occupies 1174–1235 (ICVCGQVPAG…DTKFLCPLCM (62 aa)). S1342 bears the Phosphoserine mark. Residues 1425–1519 (HQGSRTRSRA…KDSGSSAACP (95 aa)) are disordered. A compositionally biased stretch (basic residues) spans 1428–1441 (SRTRSRALERRRRQ). Over residues 1473-1487 (GREEEHYQEKADREN) the composition is skewed to basic and acidic residues. A compositionally biased stretch (polar residues) spans 1490-1517 (LTPSTDHSPSLKGNQNSLQHKDSGSSAA).

It belongs to the JARID1 histone demethylase family. Interacts withPCGF6, MSH5, ZMYND8, AR. The cofactor is L-ascorbate. Fe(2+) serves as cofactor.

It is found in the nucleus. The enzyme catalyses N(6),N(6),N(6)-trimethyl-L-lysyl(4)-[histone H3] + 3 2-oxoglutarate + 3 O2 = L-lysyl(4)-[histone H3] + 3 formaldehyde + 3 succinate + 3 CO2. Its function is as follows. Histone demethylase that specifically demethylates 'Lys-4' of histone H3, thereby playing a central role in histone code. Does not demethylate histone H3 'Lys-9', H3 'Lys-27', H3 'Lys-36', H3 'Lys-79' or H4 'Lys-20'. Demethylates trimethylated and dimethylated but not monomethylated H3 'Lys-4'. May play a role in spermatogenesis. Involved in transcriptional repression of diverse metastasis-associated genes; in this function seems to cooperate with ZMYND8. Suppresses prostate cancer cell invasion. Regulates androgen receptor (AR) transcriptional activity by demethylating H3K4me3 active transcription marks. This is Lysine-specific demethylase 5D (KDM5D) from Pan troglodytes (Chimpanzee).